The sequence spans 473 residues: Photosystem II CP43 reaction center protein (473 aa).

Residues 1 to 14 constitute a propeptide that is removed on maturation; the sequence is MKTLYSLRRFYHVE. T15 carries the N-acetylthreonine modification. Position 15 is a phosphothreonine (T15). The next 5 membrane-spanning stretches (helical) occupy residues 69–93, 134–155, 178–200, 255–275, and 291–312; these read LFEV…PHLA, LLGP…KDRN, KASY…RKIT, KPFA…LSYS, and WFNN…ASQA. E367 is a binding site for [CaMn4O5] cluster. A helical transmembrane segment spans residues 447–471; the sequence is RARAAAAGFEKGIDRDFEPVLSMTP.

The protein belongs to the PsbB/PsbC family. PsbC subfamily. PSII is composed of 1 copy each of membrane proteins PsbA, PsbB, PsbC, PsbD, PsbE, PsbF, PsbH, PsbI, PsbJ, PsbK, PsbL, PsbM, PsbT, PsbX, PsbY, PsbZ, Psb30/Ycf12, at least 3 peripheral proteins of the oxygen-evolving complex and a large number of cofactors. It forms dimeric complexes. Binds multiple chlorophylls and provides some of the ligands for the Ca-4Mn-5O cluster of the oxygen-evolving complex. It may also provide a ligand for a Cl- that is required for oxygen evolution. PSII binds additional chlorophylls, carotenoids and specific lipids. is required as a cofactor.

It is found in the plastid. The protein resides in the chloroplast thylakoid membrane. One of the components of the core complex of photosystem II (PSII). It binds chlorophyll and helps catalyze the primary light-induced photochemical processes of PSII. PSII is a light-driven water:plastoquinone oxidoreductase, using light energy to abstract electrons from H(2)O, generating O(2) and a proton gradient subsequently used for ATP formation. The polypeptide is Photosystem II CP43 reaction center protein (Cicer arietinum (Chickpea)).